Reading from the N-terminus, the 416-residue chain is Glutamyl-tRNA reductase (416 aa).

Residues 49–52 (TCNR), serine 105, 110–112 (ETQ), and glutamine 116 each bind substrate. Cysteine 50 acts as the Nucleophile in catalysis. Residue 185-190 (GAGEMI) participates in NADP(+) binding.

Belongs to the glutamyl-tRNA reductase family. In terms of assembly, homodimer.

It carries out the reaction (S)-4-amino-5-oxopentanoate + tRNA(Glu) + NADP(+) = L-glutamyl-tRNA(Glu) + NADPH + H(+). It functions in the pathway porphyrin-containing compound metabolism; protoporphyrin-IX biosynthesis; 5-aminolevulinate from L-glutamyl-tRNA(Glu): step 1/2. Catalyzes the NADPH-dependent reduction of glutamyl-tRNA(Glu) to glutamate 1-semialdehyde (GSA). In Thiobacillus denitrificans (strain ATCC 25259 / T1), this protein is Glutamyl-tRNA reductase.